The chain runs to 388 residues: Chorismate synthase (388 aa).

Arginine 40 and arginine 46 together coordinate NADP(+). FMN is bound by residues 131-133 (RSS), 252-253 (NA), glycine 296, 311-315 (KPIPT), and arginine 337.

The protein belongs to the chorismate synthase family. Homotetramer. Requires FMNH2 as cofactor.

The enzyme catalyses 5-O-(1-carboxyvinyl)-3-phosphoshikimate = chorismate + phosphate. It participates in metabolic intermediate biosynthesis; chorismate biosynthesis; chorismate from D-erythrose 4-phosphate and phosphoenolpyruvate: step 7/7. In terms of biological role, catalyzes the anti-1,4-elimination of the C-3 phosphate and the C-6 proR hydrogen from 5-enolpyruvylshikimate-3-phosphate (EPSP) to yield chorismate, which is the branch point compound that serves as the starting substrate for the three terminal pathways of aromatic amino acid biosynthesis. This reaction introduces a second double bond into the aromatic ring system. This is Chorismate synthase from Limosilactobacillus fermentum (strain NBRC 3956 / LMG 18251) (Lactobacillus fermentum).